The chain runs to 94 residues: Conotoxin Qc6.1 (94 aa).

A signal peptide spans 1–22 (MKLTCMMIVALLFLTAWTFVTA). A propeptide spanning residues 23–62 (VDSKNELENRGGWGQAGGWGKLFPMARDEMKNSEVSKLDN) is cleaved from the precursor. 3 cysteine pairs are disulfide-bonded: cysteine 66-cysteine 84, cysteine 73-cysteine 88, and cysteine 83-cysteine 92.

It belongs to the conotoxin O1 superfamily. As to expression, expressed by the venom duct.

Its subcellular location is the secreted. The protein is Conotoxin Qc6.1 of Conus quercinus (Oak cone).